Here is a 458-residue protein sequence, read N- to C-terminus: ATP synthase subunit beta (458 aa).

ATP is bound at residue 148–155 (GGAGVGKT).

It belongs to the ATPase alpha/beta chains family. F-type ATPases have 2 components, CF(1) - the catalytic core - and CF(0) - the membrane proton channel. CF(1) has five subunits: alpha(3), beta(3), gamma(1), delta(1), epsilon(1). CF(0) has three main subunits: a(1), b(2) and c(9-12). The alpha and beta chains form an alternating ring which encloses part of the gamma chain. CF(1) is attached to CF(0) by a central stalk formed by the gamma and epsilon chains, while a peripheral stalk is formed by the delta and b chains.

The protein localises to the cell inner membrane. The enzyme catalyses ATP + H2O + 4 H(+)(in) = ADP + phosphate + 5 H(+)(out). Produces ATP from ADP in the presence of a proton gradient across the membrane. The catalytic sites are hosted primarily by the beta subunits. This Pseudomonas fluorescens (strain ATCC BAA-477 / NRRL B-23932 / Pf-5) protein is ATP synthase subunit beta.